Here is a 110-residue protein sequence, read N- to C-terminus: uncharacterized protein (110 aa).

Disordered stretches follow at residues 1–41 (MEWG…ERAQ) and 65–110 (LRQL…ASES). Positions 38 to 68 (ERAQQLLDAVEQRQRQLLDTIAACEEMLRQL) form a coiled coil.

This is an uncharacterized protein from Mus musculus (Mouse).